The primary structure comprises 475 residues: Aspartyl/glutamyl-tRNA(Asn/Gln) amidotransferase subunit B (475 aa).

Belongs to the GatB/GatE family. GatB subfamily. As to quaternary structure, heterotrimer of A, B and C subunits.

It carries out the reaction L-glutamyl-tRNA(Gln) + L-glutamine + ATP + H2O = L-glutaminyl-tRNA(Gln) + L-glutamate + ADP + phosphate + H(+). The catalysed reaction is L-aspartyl-tRNA(Asn) + L-glutamine + ATP + H2O = L-asparaginyl-tRNA(Asn) + L-glutamate + ADP + phosphate + 2 H(+). Functionally, allows the formation of correctly charged Asn-tRNA(Asn) or Gln-tRNA(Gln) through the transamidation of misacylated Asp-tRNA(Asn) or Glu-tRNA(Gln) in organisms which lack either or both of asparaginyl-tRNA or glutaminyl-tRNA synthetases. The reaction takes place in the presence of glutamine and ATP through an activated phospho-Asp-tRNA(Asn) or phospho-Glu-tRNA(Gln). This is Aspartyl/glutamyl-tRNA(Asn/Gln) amidotransferase subunit B from Staphylococcus epidermidis (strain ATCC 12228 / FDA PCI 1200).